The chain runs to 158 residues: NADH-quinone oxidoreductase subunit B (158 aa).

Cys-37, Cys-38, Cys-102, and Cys-132 together coordinate [4Fe-4S] cluster.

This sequence belongs to the complex I 20 kDa subunit family. In terms of assembly, NDH-1 is composed of 14 different subunits. Subunits NuoB, C, D, E, F, and G constitute the peripheral sector of the complex. [4Fe-4S] cluster is required as a cofactor.

The protein resides in the cell inner membrane. It catalyses the reaction a quinone + NADH + 5 H(+)(in) = a quinol + NAD(+) + 4 H(+)(out). Functionally, NDH-1 shuttles electrons from NADH, via FMN and iron-sulfur (Fe-S) centers, to quinones in the respiratory chain. Couples the redox reaction to proton translocation (for every two electrons transferred, four hydrogen ions are translocated across the cytoplasmic membrane), and thus conserves the redox energy in a proton gradient. In Alkalilimnicola ehrlichii (strain ATCC BAA-1101 / DSM 17681 / MLHE-1), this protein is NADH-quinone oxidoreductase subunit B.